The chain runs to 269 residues: GTP cyclohydrolase FolE2 (269 aa).

Belongs to the GTP cyclohydrolase IV family.

It catalyses the reaction GTP + H2O = 7,8-dihydroneopterin 3'-triphosphate + formate + H(+). It functions in the pathway cofactor biosynthesis; 7,8-dihydroneopterin triphosphate biosynthesis; 7,8-dihydroneopterin triphosphate from GTP: step 1/1. Functionally, converts GTP to 7,8-dihydroneopterin triphosphate. This Azoarcus sp. (strain BH72) protein is GTP cyclohydrolase FolE2.